A 274-amino-acid polypeptide reads, in one-letter code: Putative phosphoenolpyruvate synthase regulatory protein (274 aa).

Residue 154–161 (AVSRSGKT) coordinates ADP.

This sequence belongs to the pyruvate, phosphate/water dikinase regulatory protein family. PSRP subfamily.

It catalyses the reaction [pyruvate, water dikinase] + ADP = [pyruvate, water dikinase]-phosphate + AMP + H(+). It carries out the reaction [pyruvate, water dikinase]-phosphate + phosphate + H(+) = [pyruvate, water dikinase] + diphosphate. Functionally, bifunctional serine/threonine kinase and phosphorylase involved in the regulation of the phosphoenolpyruvate synthase (PEPS) by catalyzing its phosphorylation/dephosphorylation. The protein is Putative phosphoenolpyruvate synthase regulatory protein of Alkalilimnicola ehrlichii (strain ATCC BAA-1101 / DSM 17681 / MLHE-1).